Here is a 675-residue protein sequence, read N- to C-terminus: MSDNRALRRAHVLANHILQSNPPSSNPSLSRELCLQYSPPELNESYGFDVKEMRKLLDGHNVVDRDWIYGLMMQSNLFNRKERGGKIFVSPDYNQTMEQQREITMKRIWYLLENGVFKGWLTETGPEAELRKLALLEVCGIYDHSVSIKVGVHFFLWGNAVKFFGTKRHHEKWLKNTEDYVVKGCFAMTELGHGSNVRGIETVTTYDPKTEEFVINTPCESAQKYWIGGAANHATHTIVFSQLHINGTNQGVHAFIAQIRDQDGSICPNIRIADCGHKIGLNGVDNGRIWFDNLRIPRENLLNAVADVSSDGKYVSSIKDPDQRFGAFMAPLTSGRVTIASSAIYSAKVGLSIAIRYSLSRRAFSVTANGPEVLLLDYPSHQRRLLPLLAKTYAMSFAANELKMIYVKRTPETNKAIHVVSSGFKAVLTWHNMHTLQECREAVGGQGVKTENLVGQLKGEFDVQTTFEGDNNVLMQQVSKALFAEYVSCKKRNKPFKGLGLEHMNSPRPVLPTQLTSSTLRCSQFQTNVFCLRERDLLEQFTSEVAQLQGRGESREFSFLLSHQLAEDLGKAFTEKAILQTILDAEAKLPTGSVKDVLGLVRSMYALISLEEDPSLLRYGYLSQDNVGDVRREVSKLCGELRPHALALVTSFGIPDSFLSPIAFNWVEANAWSSV.

The transit peptide at Met1–Cys34 directs the protein to the peroxisome. An FAD-binding site is contributed by Ala442 to Leu457.

Belongs to the acyl-CoA oxidase family. FAD serves as cofactor. As to expression, most abundant in flowers and senescing rosette leaves. Lower expression in hypocotyls, stems, young rosette leaves, cotyledons, cauline leaves and root tip of young seedlings.

The protein resides in the peroxisome. The catalysed reaction is a 2,3-saturated acyl-CoA + O2 = a (2E)-enoyl-CoA + H2O2. It participates in lipid metabolism; peroxisomal fatty acid beta-oxidation. Functionally, catalyzes the desaturation of medium-chain acyl-CoAs to 2-trans-enoyl-CoAs. Active on C8:0- to C14:0-CoA with a maximal activity on C12:0-CoA. This chain is Acyl-coenzyme A oxidase 3, peroxisomal (ACX3), found in Arabidopsis thaliana (Mouse-ear cress).